The primary structure comprises 421 residues: Histidine--tRNA ligase (421 aa).

The protein belongs to the class-II aminoacyl-tRNA synthetase family. Homodimer.

The protein localises to the cytoplasm. It carries out the reaction tRNA(His) + L-histidine + ATP = L-histidyl-tRNA(His) + AMP + diphosphate + H(+). The sequence is that of Histidine--tRNA ligase from Francisella tularensis subsp. tularensis (strain SCHU S4 / Schu 4).